The following is a 69-amino-acid chain: MVRVTSVGCFLLVIVSLNLVVLTNACIPEGSSCSSSGSCCHKSCCRWTCNQPCLIPGKRAKLLEFFRQR.

A signal peptide spans 1–25; sequence MVRVTSVGCFLLVIVSLNLVVLTNA. Disulfide bonds link cysteine 26-cysteine 40, cysteine 33-cysteine 45, cysteine 39-cysteine 49, and cysteine 44-cysteine 53. Glutamate 29 is modified (4-carboxyglutamate). At proline 56 the chain carries Proline amide. A propeptide spanning residues 60–69 is cleaved from the precursor; that stretch reads AKLLEFFRQR.

Post-translationally, contains 4 disulfide bonds. Expressed by the venom duct.

The protein resides in the secreted. The protein is Conotoxin Gla-TxXI of Conus textile (Cloth-of-gold cone).